A 481-amino-acid chain; its full sequence is Aspartyl/glutamyl-tRNA(Asn/Gln) amidotransferase subunit B (481 aa).

Belongs to the GatB/GatE family. GatB subfamily. As to quaternary structure, heterotrimer of A, B and C subunits.

It carries out the reaction L-glutamyl-tRNA(Gln) + L-glutamine + ATP + H2O = L-glutaminyl-tRNA(Gln) + L-glutamate + ADP + phosphate + H(+). The catalysed reaction is L-aspartyl-tRNA(Asn) + L-glutamine + ATP + H2O = L-asparaginyl-tRNA(Asn) + L-glutamate + ADP + phosphate + 2 H(+). Allows the formation of correctly charged Asn-tRNA(Asn) or Gln-tRNA(Gln) through the transamidation of misacylated Asp-tRNA(Asn) or Glu-tRNA(Gln) in organisms which lack either or both of asparaginyl-tRNA or glutaminyl-tRNA synthetases. The reaction takes place in the presence of glutamine and ATP through an activated phospho-Asp-tRNA(Asn) or phospho-Glu-tRNA(Gln). The chain is Aspartyl/glutamyl-tRNA(Asn/Gln) amidotransferase subunit B from Carboxydothermus hydrogenoformans (strain ATCC BAA-161 / DSM 6008 / Z-2901).